Consider the following 457-residue polypeptide: Cyclic dof factor 2 (457 aa).

The tract at residues 1–130 (MADPAIKLFG…GGTACSQEGK (130 aa)) is disordered. Polar residues predominate over residues 22 to 35 (DSSSSYTGFLTETQ). Acidic residues-rich tracts occupy residues 45-54 (TGDDDDEEMG) and 62-73 (EGDDVGDGGGES). Basic and acidic residues-rich tracts occupy residues 74–94 (ETDK…RNES) and 106–118 (EKTE…KTNE). The segment at 138-192 (LPCPRCNSMETKFCYYNNYNVNQPRHFCKKCQRYWTAGGTMRNVPVGAGRRKNKS) adopts a Dof-type zinc-finger fold. 4 residues coordinate Zn(2+): C140, C143, C165, and C168. Disordered stretches follow at residues 334 to 377 (QPNS…KSKP) and 417 to 457 (AFRS…HESS). The segment covering 337 to 346 (SPSGSNPNSP) has biased composition (low complexity).

Interacts with ADO2 (via kelch repeats) and ADO3 (via kelch repeats). In terms of tissue distribution, expressed in the vasculature of cotyledons and hypocotyls, leaves and roots.

Its subcellular location is the nucleus. Its function is as follows. Transcription factor that binds specifically to a 5'-AA[AG]G-3' consensus core sequence. Regulates a photoperiodic flowering response. Transcriptional repressor of 'CONSTANS' expression. The stability of CDF2 is controlled by 'GIGANTEA' and redundantly by ADO3, ADO2 and/or ADO1. This is Cyclic dof factor 2 (CDF2) from Arabidopsis thaliana (Mouse-ear cress).